Consider the following 628-residue polypeptide: Phosphomethylpyrimidine synthase (628 aa).

Residues N229, M258, Y287, H323, 343–345 (SRG), 384–387 (DGLR), and E423 each bind substrate. A Zn(2+)-binding site is contributed by H427. Y450 lines the substrate pocket. H491 serves as a coordination point for Zn(2+). [4Fe-4S] cluster-binding residues include C571, C574, and C579.

It belongs to the ThiC family. Homodimer. [4Fe-4S] cluster is required as a cofactor.

It carries out the reaction 5-amino-1-(5-phospho-beta-D-ribosyl)imidazole + S-adenosyl-L-methionine = 4-amino-2-methyl-5-(phosphooxymethyl)pyrimidine + CO + 5'-deoxyadenosine + formate + L-methionine + 3 H(+). It participates in cofactor biosynthesis; thiamine diphosphate biosynthesis. Its function is as follows. Catalyzes the synthesis of the hydroxymethylpyrimidine phosphate (HMP-P) moiety of thiamine from aminoimidazole ribotide (AIR) in a radical S-adenosyl-L-methionine (SAM)-dependent reaction. The chain is Phosphomethylpyrimidine synthase from Variovorax paradoxus (strain S110).